The following is an 861-amino-acid chain: Protein HIR1 (861 aa).

7 WD repeats span residues 14 to 54 (EHKS…KFAS), 74 to 113 (RHAGSVTTVKFSPDGKYLASGSDDRILLIWELEGGTTQPM), 132 to 171 (AHDNDIQDICWAPDSSIMVSVGLDRAIIIWNGSTFEKVKR), 174 to 213 (VHQSHVKGVVFDPANKYFATASDDRTIKMFRYHKTGETSF), 227 to 270 (PLTT…SPVS), 295 to 337 (STTD…PLIV), and 341 to 382 (ICGK…EAIP). A disordered region spans residues 450–471 (KRAQLTGTGNHTDNNTTSKAEP). Over residues 455–466 (TGTGNHTDNNTT) the composition is skewed to low complexity.

This sequence belongs to the WD repeat HIR1 family.

It is found in the nucleus. Functionally, required for replication-independent chromatin assembly and for the periodic repression of histone gene transcription during the cell cycle. This is Protein HIR1 (HIR1) from Kluyveromyces lactis (strain ATCC 8585 / CBS 2359 / DSM 70799 / NBRC 1267 / NRRL Y-1140 / WM37) (Yeast).